The primary structure comprises 116 residues: Large ribosomal subunit protein bL20 (116 aa).

Belongs to the bacterial ribosomal protein bL20 family.

Functionally, binds directly to 23S ribosomal RNA and is necessary for the in vitro assembly process of the 50S ribosomal subunit. It is not involved in the protein synthesizing functions of that subunit. This chain is Large ribosomal subunit protein bL20, found in Thermosynechococcus vestitus (strain NIES-2133 / IAM M-273 / BP-1).